Here is a 924-residue protein sequence, read N- to C-terminus: Probable dipeptidyl-aminopeptidase B (924 aa).

Positions 1 to 12 are enriched in polar residues; it reads MPSTYSDDNTLR. Residues 1 to 102 form a disordered region; that stretch reads MPSTYSDDNT…RSNQRSSADG (102 aa). At 1 to 111 the chain is on the cytoplasmic side; that stretch reads MPSTYSDDNT…GQRMDRSLRR (111 aa). Residues 14–23 are compositionally biased toward basic and acidic residues; sequence GLDRFRDHSP. Residues 31–43 show a composition bias toward polar residues; that stretch reads SQETDSTVSTTSI. Basic and acidic residues predominate over residues 47-58; it reads RIQERLDTKEFP. The span at 87 to 100 shows a compositional bias: low complexity; it reads NASPSSRSNQRSSA. The chain crosses the membrane as a helical; Signal-anchor for type II membrane protein span at residues 112–132; it reads WLFIVSGALVATWVIGLIFFV. Over 133 to 924 the chain is Vacuolar; sequence SSKAYKPSSS…GMKRRALPTA (792 aa). 2 N-linked (GlcNAc...) asparagine glycosylation sites follow: Asn-231 and Asn-364. Catalysis depends on Ser-768, which acts as the Charge relay system. An N-linked (GlcNAc...) asparagine glycan is attached at Asn-827. Catalysis depends on charge relay system residues Asp-845 and His-878.

Belongs to the peptidase S9B family.

Its subcellular location is the vacuole membrane. The enzyme catalyses Release of an N-terminal dipeptide, Xaa-Yaa-|-Zaa-, from a polypeptide, preferentially when Yaa is Pro, provided Zaa is neither Pro nor hydroxyproline.. Type IV dipeptidyl-peptidase which removes N-terminal dipeptides sequentially from polypeptides having unsubstituted N-termini provided that the penultimate residue is proline. The protein is Probable dipeptidyl-aminopeptidase B (dapB) of Neurospora crassa (strain ATCC 24698 / 74-OR23-1A / CBS 708.71 / DSM 1257 / FGSC 987).